We begin with the raw amino-acid sequence, 207 residues long: Thiamine-phosphate synthase (207 aa).

Residues 35–39 (QYRDK) and Asn67 each bind 4-amino-2-methyl-5-(diphosphooxymethyl)pyrimidine. Mg(2+) contacts are provided by Asp68 and Asp86. Thr105 serves as a coordination point for 4-amino-2-methyl-5-(diphosphooxymethyl)pyrimidine. 132–134 (SVT) contributes to the 2-[(2R,5Z)-2-carboxy-4-methylthiazol-5(2H)-ylidene]ethyl phosphate binding site. Lys135 contributes to the 4-amino-2-methyl-5-(diphosphooxymethyl)pyrimidine binding site. Gly162 contributes to the 2-[(2R,5Z)-2-carboxy-4-methylthiazol-5(2H)-ylidene]ethyl phosphate binding site.

This sequence belongs to the thiamine-phosphate synthase family. It depends on Mg(2+) as a cofactor.

The enzyme catalyses 2-[(2R,5Z)-2-carboxy-4-methylthiazol-5(2H)-ylidene]ethyl phosphate + 4-amino-2-methyl-5-(diphosphooxymethyl)pyrimidine + 2 H(+) = thiamine phosphate + CO2 + diphosphate. It catalyses the reaction 2-(2-carboxy-4-methylthiazol-5-yl)ethyl phosphate + 4-amino-2-methyl-5-(diphosphooxymethyl)pyrimidine + 2 H(+) = thiamine phosphate + CO2 + diphosphate. It carries out the reaction 4-methyl-5-(2-phosphooxyethyl)-thiazole + 4-amino-2-methyl-5-(diphosphooxymethyl)pyrimidine + H(+) = thiamine phosphate + diphosphate. It participates in cofactor biosynthesis; thiamine diphosphate biosynthesis; thiamine phosphate from 4-amino-2-methyl-5-diphosphomethylpyrimidine and 4-methyl-5-(2-phosphoethyl)-thiazole: step 1/1. Its function is as follows. Condenses 4-methyl-5-(beta-hydroxyethyl)thiazole monophosphate (THZ-P) and 2-methyl-4-amino-5-hydroxymethyl pyrimidine pyrophosphate (HMP-PP) to form thiamine monophosphate (TMP). The protein is Thiamine-phosphate synthase of Pseudomonas putida (strain W619).